Reading from the N-terminus, the 157-residue chain is MNTIVGTYECKVDSKGRLMMPNPLKKQLNVSLQEGFVLKRSVFQQCLELYPMKEWDLMMQKINKLNRFVKKNNDFIRRFTAGVRIIEIDATGRLLIPKDLAVFASVTKDIVLSSAVNIIEIWDKDLYEKAIDDSVGDFADLAEEVMGNVNDDEYGIS.

SpoVT-AbrB domains are found at residues 7–54 and 83–126; these read TYEC…PMKE and VRII…DKDL.

The protein belongs to the MraZ family. In terms of assembly, forms oligomers.

It is found in the cytoplasm. The protein localises to the nucleoid. In Flavobacterium psychrophilum (strain ATCC 49511 / DSM 21280 / CIP 103535 / JIP02/86), this protein is Transcriptional regulator MraZ.